Reading from the N-terminus, the 258-residue chain is NAD kinase (258 aa).

Catalysis depends on Asp51, which acts as the Proton acceptor. NAD(+)-binding positions include 51–52, Arg56, 119–120, Lys130, Asp149, 160–165, and Ala184; these read DG, ND, and TAYSLS.

Belongs to the NAD kinase family. The cofactor is a divalent metal cation.

It localises to the cytoplasm. The catalysed reaction is NAD(+) + ATP = ADP + NADP(+) + H(+). Functionally, involved in the regulation of the intracellular balance of NAD and NADP, and is a key enzyme in the biosynthesis of NADP. Catalyzes specifically the phosphorylation on 2'-hydroxyl of the adenosine moiety of NAD to yield NADP. In Thermotoga neapolitana (strain ATCC 49049 / DSM 4359 / NBRC 107923 / NS-E), this protein is NAD kinase.